The sequence spans 831 residues: Translation initiation factor IF-2 (831 aa).

The segment covering M1 to P11 has biased composition (basic and acidic residues). The tract at residues M1–L236 is disordered. A compositionally biased stretch (low complexity) spans T22–G31. Composition is skewed to basic and acidic residues over residues D49–D150 and D157–D166. Residues R190 to K200 are compositionally biased toward basic residues. A compositionally biased stretch (basic and acidic residues) spans G201–G225. The 171-residue stretch at H330 to T500 folds into the tr-type G domain. The tract at residues G339–T346 is G1. A GTP-binding site is contributed by G339–T346. The segment at G364 to H368 is G2. The tract at residues D386–G389 is G3. GTP contacts are provided by residues D386–H390 and N440–D443. The tract at residues N440 to D443 is G4. The tract at residues S476–K478 is G5.

Belongs to the TRAFAC class translation factor GTPase superfamily. Classic translation factor GTPase family. IF-2 subfamily.

The protein resides in the cytoplasm. In terms of biological role, one of the essential components for the initiation of protein synthesis. Protects formylmethionyl-tRNA from spontaneous hydrolysis and promotes its binding to the 30S ribosomal subunits. Also involved in the hydrolysis of GTP during the formation of the 70S ribosomal complex. The polypeptide is Translation initiation factor IF-2 (Histophilus somni (strain 2336) (Haemophilus somnus)).